The following is a 220-amino-acid chain: Ribose-5-phosphate isomerase A (220 aa).

Substrate is bound by residues 28–31, 81–84, and 94–97; these read TGST, DGAD, and KGGG. Glutamate 103 acts as the Proton acceptor in catalysis. A substrate-binding site is contributed by lysine 121.

Belongs to the ribose 5-phosphate isomerase family. Homodimer.

The enzyme catalyses aldehydo-D-ribose 5-phosphate = D-ribulose 5-phosphate. It participates in carbohydrate degradation; pentose phosphate pathway; D-ribose 5-phosphate from D-ribulose 5-phosphate (non-oxidative stage): step 1/1. Functionally, catalyzes the reversible conversion of ribose-5-phosphate to ribulose 5-phosphate. The polypeptide is Ribose-5-phosphate isomerase A (Hydrogenovibrio crunogenus (strain DSM 25203 / XCL-2) (Thiomicrospira crunogena)).